We begin with the raw amino-acid sequence, 273 residues long: 2,3,4,5-tetrahydropyridine-2,6-dicarboxylate N-succinyltransferase (273 aa).

Residues R104 and D141 each contribute to the substrate site.

Belongs to the transferase hexapeptide repeat family. In terms of assembly, homotrimer.

The protein resides in the cytoplasm. It carries out the reaction (S)-2,3,4,5-tetrahydrodipicolinate + succinyl-CoA + H2O = (S)-2-succinylamino-6-oxoheptanedioate + CoA. The protein operates within amino-acid biosynthesis; L-lysine biosynthesis via DAP pathway; LL-2,6-diaminopimelate from (S)-tetrahydrodipicolinate (succinylase route): step 1/3. The chain is 2,3,4,5-tetrahydropyridine-2,6-dicarboxylate N-succinyltransferase from Neisseria gonorrhoeae (strain ATCC 700825 / FA 1090).